Consider the following 305-residue polypeptide: Nitrogen assimilation regulatory protein nac (305 aa).

In terms of domain architecture, HTH lysR-type spans 1-58 (MNFRRLKYFVKIVDIGSLTQAAEVLHIAQPALSQQVATLEGELNQQLLIRTKRGVTPT). A DNA-binding region (H-T-H motif) is located at residues 18–37 (LTQAAEVLHIAQPALSQQVA).

This sequence belongs to the LysR transcriptional regulatory family.

Transcriptional activator for the hut, put and ure operons and repressor for the gdh and gltB operons in response to nitrogen limitation. Negative regulator of its own expression. The chain is Nitrogen assimilation regulatory protein nac (nac) from Escherichia coli (strain K12).